The primary structure comprises 130 residues: Small ribosomal subunit protein uS9 (130 aa).

It belongs to the universal ribosomal protein uS9 family.

This chain is Small ribosomal subunit protein uS9, found in Citrobacter koseri (strain ATCC BAA-895 / CDC 4225-83 / SGSC4696).